The following is a 380-amino-acid chain: Cytochrome b (380 aa).

A run of 4 helical transmembrane segments spans residues 34–54, 78–99, 114–134, and 179–199; these read FGSL…LLAM, WLIR…YLHI, WNTG…GYVL, and FFAL…IHLT. Residues His-84 and His-98 each coordinate heme b. Residues His-183 and His-197 each coordinate heme b. His-202 contributes to the a ubiquinone binding site. Helical transmembrane passes span 227–247, 289–309, 321–341, and 348–368; these read LKDI…ALFS, LGGV…PFLH, ISQL…WVGS, and FIII…ILFP.

The protein belongs to the cytochrome b family. In terms of assembly, the cytochrome bc1 complex contains 11 subunits: 3 respiratory subunits (MT-CYB, CYC1 and UQCRFS1), 2 core proteins (UQCRC1 and UQCRC2) and 6 low-molecular weight proteins (UQCRH/QCR6, UQCRB/QCR7, UQCRQ/QCR8, UQCR10/QCR9, UQCR11/QCR10 and a cleavage product of UQCRFS1). This cytochrome bc1 complex then forms a dimer. Heme b is required as a cofactor.

It localises to the mitochondrion inner membrane. In terms of biological role, component of the ubiquinol-cytochrome c reductase complex (complex III or cytochrome b-c1 complex) that is part of the mitochondrial respiratory chain. The b-c1 complex mediates electron transfer from ubiquinol to cytochrome c. Contributes to the generation of a proton gradient across the mitochondrial membrane that is then used for ATP synthesis. This chain is Cytochrome b (MT-CYB), found in Pelecanoides garnotii (Peruvian diving petrel).